We begin with the raw amino-acid sequence, 89 residues long: Large ribosomal subunit protein bL27 (89 aa).

It belongs to the bacterial ribosomal protein bL27 family.

The chain is Large ribosomal subunit protein bL27 from Cereibacter sphaeroides (strain ATCC 17029 / ATH 2.4.9) (Rhodobacter sphaeroides).